Consider the following 69-residue polypeptide: DNA gyrase inhibitor YacG (69 aa).

Cysteine 13, cysteine 16, cysteine 32, and cysteine 36 together coordinate Zn(2+).

It belongs to the DNA gyrase inhibitor YacG family. Interacts with GyrB. Requires Zn(2+) as cofactor.

Functionally, inhibits all the catalytic activities of DNA gyrase by preventing its interaction with DNA. Acts by binding directly to the C-terminal domain of GyrB, which probably disrupts DNA binding by the gyrase. The protein is DNA gyrase inhibitor YacG of Neisseria meningitidis serogroup C / serotype 2a (strain ATCC 700532 / DSM 15464 / FAM18).